We begin with the raw amino-acid sequence, 212 residues long: Superoxide dismutase [Fe] 1, chloroplastic (212 aa).

The residue at position 2 (Ala2) is an N-acetylalanine. His35, His87, Asp169, and His173 together coordinate Fe cation.

This sequence belongs to the iron/manganese superoxide dismutase family. As to quaternary structure, homodimer. Interacts with cpn20/cpn21. Fe cation serves as cofactor.

The protein resides in the cell membrane. It is found in the plastid. The protein localises to the chloroplast membrane. It localises to the chloroplast stroma. The enzyme catalyses 2 superoxide + 2 H(+) = H2O2 + O2. With respect to regulation, activated by cpn20/cpn21. Functionally, destroys superoxide anion radicals which are normally produced within the cells and which are toxic to biological systems. The chain is Superoxide dismutase [Fe] 1, chloroplastic (FSD1) from Arabidopsis thaliana (Mouse-ear cress).